We begin with the raw amino-acid sequence, 424 residues long: Piriformospora indica-insensitive protein 2 (424 aa).

Positions 1-21 (MLWQTFFSSLLLLSLLFGCNG) are cleaved as a signal peptide. LRR repeat units follow at residues 141 to 166 (ASNLESLEFRSNPGLIGELPETIGNL), 167 to 190 (TKLKSLVVLENGFSGELPASICNL), 191 to 213 (KRLKRLVFAGNSFAGMIPNCFKG), 214 to 237 (LKELLILDLSRNSFSGTLPTSFGD), 238 to 263 (LVSLLKLDLSNNLLEGNLPQELGFLK), 265 to 286 (LTLLDLRNNRFSGGLSKNIENI), 287 to 311 (QSLTELVLSNNPMGEEDMVGTNWGK), 312 to 336 (MSNLVVLDLSKMGLRGEIPTSLTNL), 337 to 360 (KRLRFLGLNNNNLTGFVPSKKLEA), and 362 to 387 (PCLGALYINGNNLTGELRFSTKFYEK).

The protein resides in the cell membrane. Functionally, required for growth promotion and enhanced seed production mediated by the endophytic fungus Piriformospora indica. This chain is Piriformospora indica-insensitive protein 2 (PII-2), found in Arabidopsis thaliana (Mouse-ear cress).